A 327-amino-acid chain; its full sequence is Aldo-keto reductase FVEG_12638 (327 aa).

Asp51 lines the NADP(+) pocket. Tyr56 (proton donor) is an active-site residue. Residue His122 participates in substrate binding. Residues Ser152–Glu153, Gly202–Asp212, and Glu286–Glu294 contribute to the NADP(+) site.

Belongs to the aldo/keto reductase family. Aldo/keto reductase 2 subfamily.

Its function is as follows. Aldo-keto reductase; part of the Fusarium detoxification of benzoxazolinone cluster 2 (FDB2) involved in the degradation of benzoxazolinones produced by the host plant. Maize, wheat, and rye produce the 2 benzoxazinone phytoanticipins 2,4-dihy-droxy-7-methoxy-1,4-benzoxazin-3-one (DIMBOA) and 2,4-dihydroxy-1,4-benzoxazin-3-one (DIBOA) that, due to their inherent instability once released, spontaneously degrade to the more stable corresponding benzoxazolinones, 6-methoxy-2-benzoxazolinone (MBOA) and 2-benzoxazolinone (BOA), respectively. The first step in the detoxification of benzoxazolinones involves the hydrolysis of the cyclic ester bond of benzoxazolinones by the FDB1 cluster gamma-lactamase MBL1 to aminophenols. MBL1 is able to convert BOA into 2-aminophenol (2-AP), as well as MBOA into 5-methoxy-2-aminophenol (2-AMP). The FDB2 cluster N-malonyltransferase FDB2/NAT1 then metabolizes aminophenols via N-malonylation to non-toxic malonamic acids. FDB2/NAT1 converts 2-AP into N-(2-hydroxyphenyl) malonamic acid (HPMA) and 2-AMP into N-(2-hydroxy-4-methoxyphenyl) malonamic acid (HMPMA). The duplicated dienlactone hydrolases DLH1 and DLH2 may provide redundant function for hydrolyzing the lactone moiety in the BOA molecule. The roles of the amidases an other enzymes encoded by the 2 FDB clusters have not been identified so far. The sequence is that of Aldo-keto reductase FVEG_12638 from Gibberella moniliformis (strain M3125 / FGSC 7600) (Maize ear and stalk rot fungus).